The sequence spans 150 residues: UPF0178 protein ASA_3749 (150 aa).

The protein belongs to the UPF0178 family.

In Aeromonas salmonicida (strain A449), this protein is UPF0178 protein ASA_3749.